Consider the following 262-residue polypeptide: Tethering factor for nuclear proteasome cut8 (262 aa).

Belongs to the cut8/STS1 family. As to quaternary structure, binds the proteasome. Post-translationally, the N-terminal part (residues 1 to 72) is polyubiquitinated by rhp6, which is required for the interaction with the proteasome.

The protein resides in the nucleus envelope. In terms of biological role, together with nucleoporin alm1, tethers the proteasome to the nuclear envelope. Involved in ubiquitin-mediated protein degradation and facilitates the degradation of nuclear proteins like mitotic cyclin and cut2. Required for normal progression of anaphase. The chain is Tethering factor for nuclear proteasome cut8 from Schizosaccharomyces pombe (strain 972 / ATCC 24843) (Fission yeast).